The following is a 434-amino-acid chain: Histidinol dehydrogenase (434 aa).

NAD(+) is bound by residues Tyr-130, Gln-188, and Asn-211. Residues Ser-237, Gln-259, and His-262 each contribute to the substrate site. Zn(2+) contacts are provided by Gln-259 and His-262. Catalysis depends on proton acceptor residues Glu-326 and His-327. Positions 327, 360, 414, and 419 each coordinate substrate. Asp-360 provides a ligand contact to Zn(2+). His-419 contributes to the Zn(2+) binding site.

The protein belongs to the histidinol dehydrogenase family. Homodimer. The cofactor is Zn(2+).

The enzyme catalyses L-histidinol + 2 NAD(+) + H2O = L-histidine + 2 NADH + 3 H(+). It functions in the pathway amino-acid biosynthesis; L-histidine biosynthesis; L-histidine from 5-phospho-alpha-D-ribose 1-diphosphate: step 9/9. In terms of biological role, catalyzes the sequential NAD-dependent oxidations of L-histidinol to L-histidinaldehyde and then to L-histidine. The chain is Histidinol dehydrogenase from Escherichia coli O157:H7.